The sequence spans 270 residues: uncharacterized protein (270 aa).

2 disordered regions span residues 35 to 67 and 168 to 204; these read IKQD…GGNK and SNNN…DNSN. The segment covering 39–48 has biased composition (low complexity); that stretch reads NNNNNNNNTN. Residues 49–67 are compositionally biased toward polar residues; it reads VSLSPSIKSQATSSTGGNK. The span at 168-191 shows a compositional bias: low complexity; that stretch reads SNNNNNNNNNNNNNNNNNNNNNNN.

This is an uncharacterized protein from Dictyostelium discoideum (Social amoeba).